The sequence spans 505 residues: Glucan endo-1,3-beta-glucosidase 4 (505 aa).

An N-terminal signal peptide occupies residues 1-23 (MLLPRWFAEALLLLLSILACSNA). Asn70 and Asn110 each carry an N-linked (GlcNAc...) asparagine glycan. Glu119 acts as the Proton donor in catalysis. Asn178 and Asn256 each carry an N-linked (GlcNAc...) asparagine glycan. The active-site Nucleophile is Glu266. N-linked (GlcNAc...) asparagine glycosylation is found at Asn298, Asn338, and Asn357. Cysteines 363 and 426 form a disulfide. N-linked (GlcNAc...) asparagine glycosylation is present at Asn453. The GPI-anchor amidated alanine moiety is linked to residue Ala474. A propeptide spans 475 to 505 (NARIIFSYHLPILAPLALTLLQLLLQHDRLL) (removed in mature form).

It belongs to the glycosyl hydrolase 17 family. In terms of processing, contains two additional disulfide bonds.

It is found in the cell membrane. It catalyses the reaction Hydrolysis of (1-&gt;3)-beta-D-glucosidic linkages in (1-&gt;3)-beta-D-glucans.. This Arabidopsis thaliana (Mouse-ear cress) protein is Glucan endo-1,3-beta-glucosidase 4.